The following is an 825-amino-acid chain: NT-3 growth factor receptor (825 aa).

A signal peptide spans Met-1–Ala-31. Intrachain disulfides connect Cys-32-Cys-38 and Cys-36-Cys-45. Residues Cys-32–Thr-429 lie on the Extracellular side of the membrane. N-linked (GlcNAc...) asparagine glycans are attached at residues Asn-68, Asn-72, and Asn-79. LRR repeat units lie at residues Gly-104–Lys-125 and His-128–Thr-149. Residues Asn-133 and Asn-163 are each glycosylated (N-linked (GlcNAc...) asparagine). The 50-residue stretch at Asn-160–Leu-209 folds into the LRRCT domain. 2 disulfide bridges follow: Cys-164/Cys-189 and Cys-166/Cys-207. Asn-203, Asn-218, Asn-232, Asn-259, Asn-267, Asn-272, and Asn-294 each carry an N-linked (GlcNAc...) asparagine glycan. 2 Ig-like C2-type domains span residues Pro-210–Thr-300 and Ser-309–Glu-382. A disulfide bridge connects residues Cys-231 and Cys-284. Cys-320 and Cys-362 form a disulfide bridge. 2 N-linked (GlcNAc...) asparagine glycosylation sites follow: Asn-375 and Asn-388. A helical membrane pass occupies residues Phe-430–Ile-453. The Cytoplasmic segment spans residues Asn-454–Gly-825. At Tyr-516 the chain carries Phosphotyrosine; by autocatalysis. The region spanning Ile-538–Gly-814 is the Protein kinase domain. ATP-binding positions include Leu-544 to Val-552 and Lys-572. The active-site Proton acceptor is Asp-679. A phosphotyrosine; by autocatalysis mark is found at Tyr-705, Tyr-709, Tyr-710, and Tyr-820.

It belongs to the protein kinase superfamily. Tyr protein kinase family. Insulin receptor subfamily. As to quaternary structure, exists in a dynamic equilibrium between monomeric (low affinity) and dimeric (high affinity) structures. Binds SH2B2. Interacts with SQSTM1 and KIDINS220. Interacts with PTPRS. Interacts with MAPK8IP3/JIP3. In terms of processing, ligand-mediated auto-phosphorylation. As to expression, preferentially in the brain, low levels in the ovaries.

Its subcellular location is the membrane. It carries out the reaction L-tyrosyl-[protein] + ATP = O-phospho-L-tyrosyl-[protein] + ADP + H(+). Receptor tyrosine kinase involved in nervous system and probably heart development. Upon binding of its ligand NTF3/neurotrophin-3, NTRK3 autophosphorylates and activates different signaling pathways, including the phosphatidylinositol 3-kinase/AKT and the MAPK pathways, that control cell survival and differentiation. The protein is NT-3 growth factor receptor (NTRK3) of Sus scrofa (Pig).